The following is a 265-amino-acid chain: Ribosomal RNA small subunit methyltransferase A (265 aa).

S-adenosyl-L-methionine-binding residues include His-13, Leu-15, Gly-40, Glu-62, Asp-87, and Asn-106.

The protein belongs to the class I-like SAM-binding methyltransferase superfamily. rRNA adenine N(6)-methyltransferase family. RsmA subfamily.

The protein resides in the cytoplasm. It catalyses the reaction adenosine(1518)/adenosine(1519) in 16S rRNA + 4 S-adenosyl-L-methionine = N(6)-dimethyladenosine(1518)/N(6)-dimethyladenosine(1519) in 16S rRNA + 4 S-adenosyl-L-homocysteine + 4 H(+). Its function is as follows. Specifically dimethylates two adjacent adenosines (A1518 and A1519) in the loop of a conserved hairpin near the 3'-end of 16S rRNA in the 30S particle. May play a critical role in biogenesis of 30S subunits. The sequence is that of Ribosomal RNA small subunit methyltransferase A from Persephonella marina (strain DSM 14350 / EX-H1).